The primary structure comprises 776 residues: MEIGWMHNRRQRQVLVFFVLLSLSGAGAELGSYSVVEETERGSFVANLGKDLGLGLTEMSTRKARIISQGNKQHLQLKAQTGDLLINEKLDREELCGPTEPCILHFQVLMENPLEIFQAELRVIDINDHSPMFTEKEMILKIPENSPLGTEFPLNHALDLDVGSNNVQNYKISPSSHFRVLIHEFRDGRKYPELVLDKELDREEEPQLRLTLTALDGGSPPRSGTAQVRIEVVDINDNAPEFEQPIYKVQIPENSPLGSLVATVSARDLDGGANGKISYTLFQPSEDISKTLEVNPMTGEVRLRKQVDFEMVTSYEVRIKATDGGGLSGKCTLLLQVVDVNDNPPQVTMSALTSPIPENSPEIVVAVFSVSDPDSGNNGKTISSIQEDLPFLLKPSVKNFYTLVTERALDREARAEYNITLTVTDMGTPRLKTEHNITVQISDVNDNAPTFTQTSYTLFVRENNSPALHIGSVSATDRDSGTNAQVTYSLLPPQDPHLPLASLVSINADNGHLFALRSLDYEALQAFEFRVGATDRGSPALSREALVRVLVLDANDNSPFVLYPLQNGSAPCTELVPRAAEPGYLVTKVVAVDGDSGQNAWLSYQLLKATEPGLFGVWAHNGEVRTARLLSERDAAKQRLVVLVKDNGEPPRSATATLHVLLVDGFSQPFLPLPEAAPGQTQANSLTVYLVVALASVSSLFLFSVLLFVAVRLCRRSRAASVGRCSMPEGPFPGRLVDVSGTGTLSQSYQYEVCLTGGSETSEFKFLKPIIPNFSP.

Residues 1–28 (MEIGWMHNRRQRQVLVFFVLLSLSGAGA) form the signal peptide. Topologically, residues 29–690 (ELGSYSVVEE…TQANSLTVYL (662 aa)) are extracellular. 5 Cadherin domains span residues 35–133 (VVEE…SPMF), 138–242 (MILK…APEF), 247–347 (YKVQ…PPQV), 352–451 (LTSP…APTF), and 456–561 (YTLF…SPFV). 2 N-linked (GlcNAc...) asparagine glycosylation sites follow: Asn418 and Asn436. N-linked (GlcNAc...) asparagine glycosylation is present at Asn567. Residues 568-671 (GSAPCTELVP…LVDGFSQPFL (104 aa)) enclose the Cadherin 6 domain. A helical membrane pass occupies residues 691–711 (VVALASVSSLFLFSVLLFVAV). At 712-776 (RLCRRSRAAS…LKPIIPNFSP (65 aa)) the chain is on the cytoplasmic side.

It is found in the membrane. Its function is as follows. Potential calcium-dependent cell-adhesion protein. May be involved in the establishment and maintenance of specific neuronal connections in the brain. This is Protocadherin beta-16 from Homo sapiens (Human).